The chain runs to 169 residues: Capsid protein (169 aa).

It belongs to the nanoviridae capsid protein family.

The protein localises to the virion. The protein is Capsid protein (DNA-S) of Subterranean clover stunt virus (strain F) (SCSV).